We begin with the raw amino-acid sequence, 422 residues long: Replication factor C large subunit (422 aa).

ATP is bound at residue 63-70; the sequence is GPPGVGKT.

Belongs to the activator 1 small subunits family. RfcL subfamily. As to quaternary structure, heteromultimer composed of small subunits (RfcS) and large subunits (RfcL).

Part of the RFC clamp loader complex which loads the PCNA sliding clamp onto DNA. This Pyrobaculum aerophilum (strain ATCC 51768 / DSM 7523 / JCM 9630 / CIP 104966 / NBRC 100827 / IM2) protein is Replication factor C large subunit.